The primary structure comprises 217 residues: Protein-L-isoaspartate O-methyltransferase (217 aa).

Residue Ser67 is part of the active site.

Belongs to the methyltransferase superfamily. L-isoaspartyl/D-aspartyl protein methyltransferase family.

It localises to the cytoplasm. It carries out the reaction [protein]-L-isoaspartate + S-adenosyl-L-methionine = [protein]-L-isoaspartate alpha-methyl ester + S-adenosyl-L-homocysteine. Functionally, catalyzes the methyl esterification of L-isoaspartyl residues in peptides and proteins that result from spontaneous decomposition of normal L-aspartyl and L-asparaginyl residues. It plays a role in the repair and/or degradation of damaged proteins. The polypeptide is Protein-L-isoaspartate O-methyltransferase (Azoarcus sp. (strain BH72)).